The following is a 1026-amino-acid chain: MRLGSNSYDVQRTEAIGQTPVKTPPPNQIRCTVTFLDSTSYHFEIEKNSLGIVLLEKVFNYLEIIEKDYFGLVFIAVDNSSAQQKKWLDPSKNLRKQMICPPYHLFFRVKFYVRDPNRLRDEFTRFQFYQQVRQNLEEGRLPCNEGSLALLASYVVQAEVGDFEEKTHGMSRTCLCYKIQFATLPDDFSDRVAELHQLHIGQTPDVAEQNFLDHARRLEMYGMDVYDGVDANHLPIEIGVGAVGIKVFHEGIKMNEYAWVRIRKLSFKKKQFQVLVANEDGVSETIMIFNIMSAKICKLLWKCCIEQHTFFRLKTPPKTPQRKVFNFGSKFRYSGRTEYQTLEENEHRKSAGHRNFHRSLSKSSFLRSTFSGNTQSIDSSRYTNTTTTDSPELPSSGQLLARRLLSAARHDTDSSDALGYASDGAVVCAPLTTPLSPRRTRDYATDSESSAPSLRQQRLSKEAIYYGTQESCDEKSWTPSMACTSTSPGIHASTASVRPVSSGSTPNGASRKSANSGYSGYGYATQTQQPTSTTNASYSPYLNGTISRSSGAAVAKAAARGLPPTNQQAYNTSSPRNSVASYSSFASAGIGGSPPRSKRSPQSNKSSSPVGEDQVVTIKMRPDRHGRFGFNVKGGADQNYPVIVSRVAPGSSADKCQPRLNEGDQVLFIDGRDVSTMSHDHVVQFIRSARSGLNGGELHLTIRPNVYRLGEEVDEPDSTMVPEPARVADSVPNSDKLSKSLQLLADSLNSGKVVDHFEMLYRKKPGMSMNICRLTANLAKNRYRDVCPYDDTRVTLQASPSGDYINANYVNMEIPSSGIVNRYIACQGPLAHTSSDFWVMVWEQHCTTIVMLTTITERGRVKCHQYWPRVFETQEYGRLMIKCIKDKQTTNCCYREFSIRDRNSSEERRVTQMQYIAWPDHGVPDDPKHFIQFVDEVRKARQGSVDPIVVHCSAGIGRTGVLILMETAACLVESNEPVYPLDIVRTMRDQRAMLIQTPGQYTFVCESILRAYHDGTIKPLAEYSKR.

The 287-residue stretch at 29-315 folds into the FERM domain; that stretch reads IRCTVTFLDS…EQHTFFRLKT (287 aa). Disordered regions lie at residues 376–396, 430–456, 489–515, and 584–616; these read SIDS…LPSS, PLTT…SLRQ, GIHA…KSAN, and SFAS…DQVV. The span at 446-456 shows a compositional bias: polar residues; it reads DSESSAPSLRQ. The span at 600 to 609 shows a compositional bias: low complexity; the sequence is SPQSNKSSSP. Residues 617 to 689 enclose the PDZ domain; that stretch reads TIKMRPDRHG…DHVVQFIRSA (73 aa). The 259-residue stretch at 753–1011 folds into the Tyrosine-protein phosphatase domain; it reads VVDHFEMLYR…TFVCESILRA (259 aa). Substrate is bound by residues Asp920, 952–958, and Gln996; that span reads CSAGIGR. Cys952 (phosphocysteine intermediate) is an active-site residue.

The protein belongs to the protein-tyrosine phosphatase family. Non-receptor class subfamily.

The protein resides in the cytoplasm. It localises to the cytoskeleton. The enzyme catalyses O-phospho-L-tyrosyl-[protein] + H2O = L-tyrosyl-[protein] + phosphate. This is Tyrosine-protein phosphatase 1 (ptp-1) from Caenorhabditis elegans.